A 396-amino-acid polypeptide reads, in one-letter code: UPF0046 protein T07D4.2 (396 aa).

The interval 73-94 (SRRGSIASGIPMDKKTRRKLSN) is disordered.

This sequence belongs to the UPF0046 family.

This is UPF0046 protein T07D4.2 from Caenorhabditis elegans.